Reading from the N-terminus, the 194-residue chain is Phosphoheptose isomerase (194 aa).

The SIS domain occupies 37 to 194 (ISDSFKQGGK…LIEFEMAKDV (158 aa)). Substrate is bound at residue 52 to 54 (NGG). Zn(2+)-binding residues include His61 and Glu65. Substrate is bound by residues Glu65, 93 to 94 (ND), 119 to 121 (STS), Ser124, and Gln172. Positions 172 and 180 each coordinate Zn(2+).

The protein belongs to the SIS family. GmhA subfamily. Homotetramer. Requires Zn(2+) as cofactor.

The protein resides in the cytoplasm. The catalysed reaction is 2 D-sedoheptulose 7-phosphate = D-glycero-alpha-D-manno-heptose 7-phosphate + D-glycero-beta-D-manno-heptose 7-phosphate. It functions in the pathway carbohydrate biosynthesis; D-glycero-D-manno-heptose 7-phosphate biosynthesis; D-glycero-alpha-D-manno-heptose 7-phosphate and D-glycero-beta-D-manno-heptose 7-phosphate from sedoheptulose 7-phosphate: step 1/1. Functionally, catalyzes the isomerization of sedoheptulose 7-phosphate in D-glycero-D-manno-heptose 7-phosphate. In Actinobacillus succinogenes (strain ATCC 55618 / DSM 22257 / CCUG 43843 / 130Z), this protein is Phosphoheptose isomerase.